The chain runs to 83 residues: Hainantoxin-III 2 (83 aa).

Positions 1-21 (MKASMYLALAGLVLLFVVGYA) are cleaved as a signal peptide. A propeptide spanning residues 22–48 (SESEEKEFPRELLSKIFAVDDFKGEER) is cleaved from the precursor. Cystine bridges form between Cys50–Cys65, Cys57–Cys70, and Cys64–Cys77. Leu81 carries the leucine amide modification.

This sequence belongs to the neurotoxin 10 (Hwtx-1) family. 15 (Hntx-3) subfamily. Monomer. In terms of tissue distribution, expressed by the venom gland.

The protein localises to the secreted. In terms of biological role, selective antagonist of neuronal tetrodotoxin (TTX)-sensitive voltage-gated sodium channels (IC(50)=1270 nM on Nav1.1/SCN1A, 270 nM on Nav1.2/SCN2A, 491 nM on Nav1.3/SCN3A and 232 nM on Nav1.7/SCN9A). This toxin suppress Nav1.7 current amplitude without significantly altering the activation, inactivation, and repriming kinetics. Short extreme depolarizations partially activate the toxin-bound channel, indicating voltage-dependent inhibition of this toxin. This toxin increases the deactivation of the Nav1.7 current after extreme depolarizations. The toxin-Nav1.7 complex is gradually dissociated upon prolonged strong depolarizations in a voltage-dependent manner, and the unbound toxin rebinds to Nav1.7 after a long repolarization. Moreover, analysis of chimeric channels showed that the DIIS3-S4 linker is critical for toxin binding to Nav1.7. These data are consistent with this toxin interacting with Nav1.7 site 4 and trapping the domain II voltage sensor in the closed state. The sequence is that of Hainantoxin-III 2 from Cyriopagopus hainanus (Chinese bird spider).